Here is a 118-residue protein sequence, read N- to C-terminus: Protein Rev (118 aa).

2 positions are modified to phosphoserine; by host CK2: Ser-5 and Ser-8. Residues Leu-18–Asp-28 are homomultimerization. The segment at Tyr-23–Arg-52 is disordered. Residues Thr-36–Arg-52 carry the Nuclear localization signal and RNA-binding (RRE) motif. Residues Gln-38–Glu-49 are compositionally biased toward basic residues. The short motif at Leu-75 to Asp-86 is the Nuclear export signal and binding to XPO1 element. Residues Gly-92–Glu-118 form a disordered region. 2 positions are modified to phosphoserine; by host: Ser-94 and Ser-101.

Belongs to the HIV-1 REV protein family. In terms of assembly, homomultimer; when bound to the RRE. Multimeric assembly is essential for activity and may involve XPO1. Binds to human KPNB1, XPO1, TNPO1, RANBP5 and IPO7. Interacts with the viral Integrase. Interacts with human KHDRBS1. Interacts with human NAP1; this interaction decreases Rev multimerization and stimulates its activity. Interacts with human DEAD-box helicases DDX3 and DDX24; these interactions may serve for viral RNA export to the cytoplasm and packaging, respectively. Interacts with human PSIP1; this interaction may inhibit HIV-1 DNA integration by promoting dissociation of the Integrase-LEDGF/p75 complex. Post-translationally, asymmetrically arginine dimethylated at one site by host PRMT6. Methylation impairs the RNA-binding activity and export of viral RNA from the nucleus to the cytoplasm. Phosphorylated by protein kinase CK2. Presence of, and maybe binding to the N-terminus of the regulatory beta subunit of CK2 is necessary for CK2-mediated Rev's phosphorylation.

Its subcellular location is the host nucleus. It localises to the host nucleolus. The protein localises to the host cytoplasm. In terms of biological role, escorts unspliced or incompletely spliced viral pre-mRNAs (late transcripts) out of the nucleus of infected cells. These pre-mRNAs carry a recognition sequence called Rev responsive element (RRE) located in the env gene, that is not present in fully spliced viral mRNAs (early transcripts). This function is essential since most viral proteins are translated from unspliced or partially spliced pre-mRNAs which cannot exit the nucleus by the pathway used by fully processed cellular mRNAs. Rev itself is translated from a fully spliced mRNA that readily exits the nucleus. Rev's nuclear localization signal (NLS) binds directly to KPNB1/Importin beta-1 without previous binding to KPNA1/Importin alpha-1. KPNB1 binds to the GDP bound form of RAN (Ran-GDP) and targets Rev to the nucleus. In the nucleus, the conversion from Ran-GDP to Ran-GTP dissociates Rev from KPNB1 and allows Rev's binding to the RRE in viral pre-mRNAs. Rev multimerization on the RRE via cooperative assembly exposes its nuclear export signal (NES) to the surface. Rev can then form a complex with XPO1/CRM1 and Ran-GTP, leading to nuclear export of the complex. Conversion from Ran-GTP to Ran-GDP mediates dissociation of the Rev/RRE/XPO1/RAN complex, so that Rev can return to the nucleus for a subsequent round of export. Beside KPNB1, also seems to interact with TNPO1/Transportin-1, RANBP5/IPO5 and IPO7/RANBP7 for nuclear import. The nucleoporin-like HRB/RIP is an essential cofactor that probably indirectly interacts with Rev to release HIV RNAs from the perinuclear region to the cytoplasm. The protein is Protein Rev of Human immunodeficiency virus type 1 group M subtype B (isolate LW123) (HIV-1).